Here is a 129-residue protein sequence, read N- to C-terminus: Small ribosomal subunit protein uS11 (129 aa).

Belongs to the universal ribosomal protein uS11 family. Part of the 30S ribosomal subunit. Interacts with proteins S7 and S18. Binds to IF-3.

Located on the platform of the 30S subunit, it bridges several disparate RNA helices of the 16S rRNA. Forms part of the Shine-Dalgarno cleft in the 70S ribosome. The chain is Small ribosomal subunit protein uS11 from Listeria innocua serovar 6a (strain ATCC BAA-680 / CLIP 11262).